Here is a 306-residue protein sequence, read N- to C-terminus: Manganese-binding lipoprotein MntA (306 aa).

Residues 1–18 (MRQGLMAAVLFATFALTG) form the signal peptide. Cys19 is lipidated: N-palmitoyl cysteine. Cys19 carries S-diacylglycerol cysteine lipidation. The Mn(2+) site is built by His66, His132, His198, and Asp278.

The protein belongs to the bacterial solute-binding protein 9 family. In terms of assembly, the complex is probably composed of two ATP-binding proteins (MntB), two transmembrane proteins (MntC and MntD) and a solute-binding protein (MntA). Interacts with FloT.

Its subcellular location is the cell membrane. The protein resides in the membrane raft. Probably part of ATP-binding cassette (ABC) transport system MntABCD involved in manganese import. Binds manganese and delivers it to the membrane permease for translocation into the cytoplasm. The polypeptide is Manganese-binding lipoprotein MntA (Bacillus subtilis (strain 168)).